The following is a 199-amino-acid chain: Transgelin-3 (199 aa).

The Calponin-homology (CH) domain occupies 24–136; the sequence is ADLENKLVDW…RTLMALGSVA (113 aa). Ser163 bears the Phosphoserine mark. Residues 174–199 form a Calponin-like repeat; it reads IGLQMGSNKGASQAGMTGYGMPRQIM. The segment covering 178–188 has biased composition (polar residues); the sequence is MGSNKGASQAG. The disordered stretch occupies residues 178–199; it reads MGSNKGASQAGMTGYGMPRQIM.

Belongs to the calponin family. As to expression, abundant and ubiquitous expression in neurons.

The polypeptide is Transgelin-3 (Tagln3) (Rattus norvegicus (Rat)).